A 283-amino-acid polypeptide reads, in one-letter code: MTGPSAAGRAGTADNVVGVEVTIDGMLVIADRLHLVDFPVTLGIRPNIPQEDLRDIVWEQVQRDLTAQGVLDLHGEPQPTVAEMVETLGRPDRTLEGRWWRRDIGGVMVRFVVCRRGDRHVIAARDGDMLVLQLVAPQVGLAGMVTAVLGPAEPANVEPLTGVATELAECTTASQLTQYGIAPASARVYAEIVGNPTGWVEIVASQRHPGGTTTQTDAAAGVLDSKLGRLVSLPRRVGGDLYGSFLPGTQQNLERALDGLLELLPAGAWLDHTSDHAQASSRG.

The protein belongs to the EspG family. In terms of assembly, interacts specifically with ESX-1-dependent PE/PPE proteins. Interacts with PPE68.

It is found in the cytoplasm. Functionally, specific chaperone for cognate PE/PPE proteins. Plays an important role in preventing aggregation of PE/PPE dimers. This chain is ESX-1 secretion-associated protein EspG1, found in Mycobacterium tuberculosis (strain ATCC 25618 / H37Rv).